Reading from the N-terminus, the 571-residue chain is MERPEEGKQSPPPQPWGRLLRLGAEEGEPYVLLRKREWTIGRRRGCDLSFPSNKLVSGDHCRIAVDEKSGQVTLEDTSTSGTVINKLKVVKKQTCPLQTGDVIYLVYRKNEPEHRSGGGGISPKGSGPSVASDEVSSFATALPDRKTASFSSLEPQDQEDLEPMKKKMRGDGDLDLNGQLLVAQPRRNAQTVHEDVRAAAGKPDKMEETLTCIICQDLLHDCVSLQPCMHTFCAACYSGWMERSSLCPTCRCPVERICKNHILNNLVEAYLIQHPDKSRSEEDVQSMDARNKITQDMLQPKVRRSFSDEEGSSEDLLELSDVDSESSDISQPYVVCRQCPEYRRQAAQPPPCPAPEGEPGVPQALVDAPSTSVSLTTVQDYVCPLQGSHALCTCCFQPMPDRRAEREQNPRVAPQQCAVCLQPFCHLYWGCTRTGCFGCLAPFCELNLGDKCLDGVLNNNSYESDILKNYLATRGLTWKNMLTESLVALQRGVFLLSDYRVTGDTILCYCCGLRSFRELTYQYRQNIPASELPVAVTSRPDCYWGRNCRTQVKAHHAMKFNHICEQTRFKN.

Residues 1–21 (MERPEEGKQSPPPQPWGRLLR) form a disordered region. Positions 38-89 (WTIGRRRGCDLSFPSNKLVSGDHCRIAVDEKSGQVTLEDTSTSGTVINKLKV) constitute an FHA domain. The disordered stretch occupies residues 113–138 (EHRSGGGGISPKGSGPSVASDEVSSF). At S152 the chain carries Phosphoserine. The RING-type zinc finger occupies 212-251 (CIICQDLLHDCVSLQPCMHTFCAACYSGWMERSSLCPTCR). Position 294 is a phosphothreonine (T294). The disordered stretch occupies residues 297-325 (MLQPKVRRSFSDEEGSSEDLLELSDVDSE). Acidic residues predominate over residues 308-325 (DEEGSSEDLLELSDVDSE). A PBZ-type zinc finger spans residues 540–562 (PDCYWGRNCRTQVKAHHAMKFNH).

Belongs to the CHFR family. In terms of assembly, interacts with HDAC1 and HDAC2. Interacts with PML (with sumoylated form of PML). Post-translationally, poly-ADP-ribosylated. In addition to binding non covalently poly(ADP-ribose) via its PBZ-type zinc finger, the protein is also covalently poly-ADP-ribosylated by PARP1. In terms of processing, autoubiquitinated; may regulate its cellular level. Phosphorylated by PKB. Phosphorylation may affect its E3 ligase activity.

It localises to the nucleus. The protein resides in the PML body. The enzyme catalyses S-ubiquitinyl-[E2 ubiquitin-conjugating enzyme]-L-cysteine + [acceptor protein]-L-lysine = [E2 ubiquitin-conjugating enzyme]-L-cysteine + N(6)-ubiquitinyl-[acceptor protein]-L-lysine.. The protein operates within protein modification; protein ubiquitination. In terms of biological role, E3 ubiquitin-protein ligase that functions in the antephase checkpoint by actively delaying passage into mitosis in response to microtubule poisons. Acts in early prophase before chromosome condensation, when the centrosome move apart from each other along the periphery of the nucleus. Probably involved in signaling the presence of mitotic stress caused by microtubule poisons by mediating the 'Lys-48'-linked ubiquitination of target proteins, leading to their degradation by the proteasome. Promotes the ubiquitination and subsequent degradation of AURKA and PLK1. Probably acts as a tumor suppressor, possibly by mediating the polyubiquitination of HDAC1, leading to its degradation. May also promote the formation of 'Lys-63'-linked polyubiquitin chains and functions with the specific ubiquitin-conjugating UBC13-MMS2 (UBE2N-UBE2V2) heterodimer. Substrates that are polyubiquitinated at 'Lys-63' are usually not targeted for degradation, but are rather involved in signaling cellular stress. The sequence is that of E3 ubiquitin-protein ligase CHFR (CHFR) from Pongo abelii (Sumatran orangutan).